The sequence spans 528 residues: Protein spinster homolog 1 (528 aa).

The interval 1–49 (MAGSDTAPFLSQADDPDDGPVPGTPGLPGSTGNPKSEEPEVPDQEGLQR) is disordered. A2 is subject to N-acetylalanine. 12 helical membrane passes run 50–70 (ITGLSPGRSALIVAVLCYINL), 98–118 (GLIQTVFISSYMVLAPVFGYL), 127–147 (LMCGGIAFWSLVTLGSSFIPG), 160–180 (VGVGEASYSTIAPTLIADLFV), 187–207 (MLSIFYFAIPVGSGLGYIAGS), 218–238 (WALRVTPGLGVVAVLLLFLVV), 278–298 (LGFTAVAFVTGSLALWAPAFL), 323–343 (LIFGLITCLTGVLGVGLGVEI), 357–377 (LVCATGLLGSAPFLFLSLACA), 381–401 (IVATYIFIFIGETLLSMNWAI), 421–441 (FQIVLSHLLGDAGSPYLIGLI), and 465–485 (MLCAFVGALGGAAFLGTAIFI). Phosphoserine is present on S518.

The protein belongs to the major facilitator superfamily. Spinster (TC 2.A.1.49) family. As to quaternary structure, interacts with BCL2 and BCL2L1.

The protein localises to the lysosome membrane. Its subcellular location is the mitochondrion inner membrane. The enzyme catalyses a 1-acyl-sn-glycero-3-phosphocholine(out) + H(+)(out) = a 1-acyl-sn-glycero-3-phosphocholine(in) + H(+)(in). It carries out the reaction 1-hexadecanoyl-sn-glycero-3-phosphocholine(out) + H(+)(out) = 1-hexadecanoyl-sn-glycero-3-phosphocholine(in) + H(+)(in). It catalyses the reaction 1-(9Z-octadecenoyl)-sn-glycero-3-phosphocholine(out) + H(+)(out) = 1-(9Z-octadecenoyl)-sn-glycero-3-phosphocholine(in) + H(+)(in). The catalysed reaction is 1-(5Z,8Z,11Z,14Z-eicosatetraenoyl)-sn-glycero-3-phosphocholine(out) + H(+)(out) = 1-(5Z,8Z,11Z,14Z-eicosatetraenoyl)-sn-glycero-3-phosphocholine(in) + H(+)(in). The enzyme catalyses 1-(4Z,7Z,10Z,13Z,16Z,19Z-docosahexaenoyl)-sn-glycero-3-phosphocholine(out) + H(+)(out) = 1-(4Z,7Z,10Z,13Z,16Z,19Z-docosahexaenoyl)-sn-glycero-3-phosphocholine(in) + H(+)(in). It carries out the reaction a 1-acyl-sn-glycero-3-phosphoethanolamine(out) + H(+)(out) = a 1-acyl-sn-glycero-3-phosphoethanolamine(in) + H(+)(in). It catalyses the reaction 1-(9Z-octadecenoyl)-sn-glycero-3-phosphoethanolamine(out) + H(+)(out) = 1-(9Z-octadecenoyl)-sn-glycero-3-phosphoethanolamine(in) + H(+)(in). The catalysed reaction is 1-acyl-sn-glycero-3-phospho-(1'-sn-glycerol)(out) + H(+)(out) = 1-acyl-sn-glycero-3-phospho-(1'-sn-glycerol)(in) + H(+)(in). The enzyme catalyses 1-(9Z-octadecenoyl)-sn-glycero-3-phospho-(1'-sn-glycerol)(out) + H(+)(out) = 1-(9Z-octadecenoyl)-sn-glycero-3-phospho-(1'-sn-glycerol)(in) + H(+)(in). It carries out the reaction a 1-O-(1Z-alkenyl)-sn-glycero-3-phosphocholine(out) + H(+)(out) = a 1-O-(1Z-alkenyl)-sn-glycero-3-phosphocholine(in) + H(+)(in). It catalyses the reaction 1-(1Z-hexadecenyl)-sn-glycero-3-phosphocholine(out) + H(+)(out) = 1-(1Z-hexadecenyl)-sn-glycero-3-phosphocholine(in) + H(+)(in). The catalysed reaction is a 1-O-(1Z-alkenyl)-sn-glycero-3-phosphoethanolamine(out) + H(+)(out) = a 1-O-(1Z-alkenyl)-sn-glycero-3-phosphoethanolamine(in) + H(+)(in). The enzyme catalyses 1-O-(1Z-hexadecenyl)-sn-glycero-3-phosphoethanolamine(out) + H(+)(out) = 1-O-(1Z-hexadecenyl)-sn-glycero-3-phosphoethanolamine(in) + H(+)(in). Its function is as follows. Plays a critical role in the phospholipid salvage pathway from lysosomes to the cytosol. Mediates the rate-limiting, proton-dependent, lysosomal efflux of lysophospholipids, which can then be reacylated by acyltransferases in the endoplasmic reticulum to form phospholipids. Selective for zwitterionic headgroups such as lysophosphatidylcholine (LPC) and lysophosphatidylethanolamine (LPE), can also transport lysophosphatidylglycerol (LPG), but not other anionic lysophospholipids, sphingosine, nor sphingomyelin. Transports lysophospholipids with saturated, monounsaturated, and polyunsaturated fatty acids, such as 1-hexadecanoyl-sn-glycero-3-phosphocholine, 1-(9Z-octadecenoyl)-sn-glycero-3-phosphocholine and 1-(4Z,7Z,10Z,13Z,16Z,19Z-docosahexaenoyl)-sn-glycero-3-phosphocholine, respectively. Can also transport lysoplasmalogen (LPC with a fatty alcohol) such as 1-(1Z-hexadecenyl)-sn-glycero-3-phosphocholine. Lysosomal LPC could function as intracellular signaling messenger. Essential player in lysosomal homeostasis. Crucial for cell survival under conditions of nutrient limitation. May be involved in necrotic or autophagic cell death. The polypeptide is Protein spinster homolog 1 (SPNS1) (Homo sapiens (Human)).